Here is a 293-residue protein sequence, read N- to C-terminus: Homoserine kinase (293 aa).

80 to 90 (RPASGLGSSAA) is a binding site for ATP.

The protein belongs to the GHMP kinase family. Homoserine kinase subfamily.

It is found in the cytoplasm. The enzyme catalyses L-homoserine + ATP = O-phospho-L-homoserine + ADP + H(+). The protein operates within amino-acid biosynthesis; L-threonine biosynthesis; L-threonine from L-aspartate: step 4/5. Its function is as follows. Catalyzes the ATP-dependent phosphorylation of L-homoserine to L-homoserine phosphate. In Halorubrum lacusprofundi (strain ATCC 49239 / DSM 5036 / JCM 8891 / ACAM 34), this protein is Homoserine kinase.